The following is a 247-amino-acid chain: 4-hydroxy-tetrahydrodipicolinate reductase (247 aa).

NAD(+) contacts are provided by residues 12-17 (GITGRM), 78-80 (GTT), and 102-105 (AANF). The Proton donor/acceptor role is filled by histidine 136. Residue histidine 137 coordinates (S)-2,3,4,5-tetrahydrodipicolinate. Lysine 140 functions as the Proton donor in the catalytic mechanism. Residue 146–147 (GT) coordinates (S)-2,3,4,5-tetrahydrodipicolinate.

Belongs to the DapB family.

Its subcellular location is the cytoplasm. It catalyses the reaction (S)-2,3,4,5-tetrahydrodipicolinate + NAD(+) + H2O = (2S,4S)-4-hydroxy-2,3,4,5-tetrahydrodipicolinate + NADH + H(+). It carries out the reaction (S)-2,3,4,5-tetrahydrodipicolinate + NADP(+) + H2O = (2S,4S)-4-hydroxy-2,3,4,5-tetrahydrodipicolinate + NADPH + H(+). Its pathway is amino-acid biosynthesis; L-lysine biosynthesis via DAP pathway; (S)-tetrahydrodipicolinate from L-aspartate: step 4/4. Catalyzes the conversion of 4-hydroxy-tetrahydrodipicolinate (HTPA) to tetrahydrodipicolinate. The chain is 4-hydroxy-tetrahydrodipicolinate reductase from Acidiphilium cryptum (strain JF-5).